A 313-amino-acid polypeptide reads, in one-letter code: D-alanine--D-alanine ligase (313 aa).

Residues 107-303 (KQAFAAAGLT…FEALVEQIAC (197 aa)) enclose the ATP-grasp domain. Residue 135-188 (PFGLPVVVKPVQEGSSVGVTIVKKPEDLQAALDEAFRYDTLVLVEKYIKGQEVQ) coordinates ATP. Residues Asp-256, Glu-269, and Asn-271 each contribute to the Mg(2+) site.

This sequence belongs to the D-alanine--D-alanine ligase family. Mg(2+) serves as cofactor. Mn(2+) is required as a cofactor.

The protein resides in the cytoplasm. It catalyses the reaction 2 D-alanine + ATP = D-alanyl-D-alanine + ADP + phosphate + H(+). It functions in the pathway cell wall biogenesis; peptidoglycan biosynthesis. Cell wall formation. This Trichlorobacter lovleyi (strain ATCC BAA-1151 / DSM 17278 / SZ) (Geobacter lovleyi) protein is D-alanine--D-alanine ligase.